Consider the following 31-residue polypeptide: Cyclotide mden-N (31 aa).

Residues 1 to 31 (GTIPCGESCVYIPCLTSALGCSCKNKVCYRN) constitute a cross-link (cyclopeptide (Gly-Asn)). Cystine bridges form between C5–C21, C9–C23, and C14–C28.

It belongs to the cyclotide family. Bracelet subfamily. In terms of processing, this is a cyclic peptide.

In terms of biological role, probably participates in a plant defense mechanism. The protein is Cyclotide mden-N of Melicytus dentatus (Tree violet).